Here is a 327-residue protein sequence, read N- to C-terminus: Biotin synthase (327 aa).

Residues 49–282 (FNKDKIDLCS…NKVIRLCGGR (234 aa)) form the Radical SAM core domain. [4Fe-4S] cluster is bound by residues Cys67, Cys71, and Cys74. Residues Ser110, Cys142, Cys201, and Arg277 each contribute to the [2Fe-2S] cluster site.

It belongs to the radical SAM superfamily. Biotin synthase family. As to quaternary structure, homodimer. The cofactor is [4Fe-4S] cluster. [2Fe-2S] cluster serves as cofactor.

It carries out the reaction (4R,5S)-dethiobiotin + (sulfur carrier)-SH + 2 reduced [2Fe-2S]-[ferredoxin] + 2 S-adenosyl-L-methionine = (sulfur carrier)-H + biotin + 2 5'-deoxyadenosine + 2 L-methionine + 2 oxidized [2Fe-2S]-[ferredoxin]. It functions in the pathway cofactor biosynthesis; biotin biosynthesis; biotin from 7,8-diaminononanoate: step 2/2. In terms of biological role, catalyzes the conversion of dethiobiotin (DTB) to biotin by the insertion of a sulfur atom into dethiobiotin via a radical-based mechanism. This chain is Biotin synthase, found in Methanococcus maripaludis (strain C5 / ATCC BAA-1333).